Consider the following 244-residue polypeptide: 5-oxoprolinase subunit A (244 aa).

This sequence belongs to the LamB/PxpA family. In terms of assembly, forms a complex composed of PxpA, PxpB and PxpC.

It carries out the reaction 5-oxo-L-proline + ATP + 2 H2O = L-glutamate + ADP + phosphate + H(+). In terms of biological role, catalyzes the cleavage of 5-oxoproline to form L-glutamate coupled to the hydrolysis of ATP to ADP and inorganic phosphate. This chain is 5-oxoprolinase subunit A, found in Salmonella arizonae (strain ATCC BAA-731 / CDC346-86 / RSK2980).